The primary structure comprises 687 residues: MAEELVLERCDLELEANGRDHHTADLCRERLVVRRGQPFWLTLHFEGRNYEASVDSLTFCAVTGPDPSEEAGTKALFRLSDATEEGAWAAVAADQRDSTLSLHLSTPANAPVGHYRLSLEASTGYQGSSFMLGQFTLLFNSWCPADAVYLDSDEERQEYVLTQQGFIYQGSAKFIKNIPWNFGQFEEGILDICLMLLDVNPKFLRNAGRDCSRRSSPVYVGRVVSGMVNCNDDQGVLLGRWDNNYADGISPMSWIGSVDILRRWKRDGCQRVKYGQCWVFAAVACTVLRCLGIPTRVVTNYNSAHDQNSNLLIEYFRNEFGEIQSDKSEMIWNFHCWVESWMTRPDLQPGYEGWQALDPTPQEKSEGTYCCGPVPVRAIKEGDLSTKYDAPFVFAEVNADVVDWIRQDDGSLHKSINHSLVVGLKISTKCVGRDDREDITHSYKYPEGSPEEREAFTRANHLNKLVNKEETGVAMRIRVGEGMNRGCDFDVFAHITNSTPEEHTGRLLLCARTVSYNGILGPECGTKDLLSLSLEPYSEKSIPLRILYEKYCDCLTESNLIKVRGLLIEPAANSYLLAERDIYLENPEIKIRILGEPKQNRKLVAEISLQNPLTVALSGCTFTVEGAGLIEEQKTVDVPDPVEAGEEVKVRVDLLPLYVGRHKLVVNFESDRLKAVKGFRNVIVGPS.

Ala2 is subject to N-acetylalanine. 2 disulfide bridges follow: Cys230/Cys370 and Cys370/Cys371. Active-site residues include Cys277, His335, and Asp358. Residues Asn398, Asp400, Glu437, Glu447, and Glu452 each coordinate Ca(2+). Residue Lys468 is modified to N6-acetyllysine. Residue 476-483 (RIRVGEGM) coordinates GTP. Residue Glu539 coordinates Ca(2+). 580–583 (RDIY) serves as a coordination point for GTP. Residue Gln633 forms an Isoglutamyl lysine isopeptide (Gln-Lys) (interchain with K-?) linkage.

The protein belongs to the transglutaminase superfamily. Transglutaminase family. As to quaternary structure, monomer. Interacts with phospholipase C; promoting alpha-1 adrenergic receptor signaling. Interacts with PLCD1. Ca(2+) is required as a cofactor. Disulfide bond formation inactivates the calcium-dependent acyltransferase activity. Cys-370 can form disulfide bonds with both Cys-230 and Cys-371: formation of a disulfide bond between Cys-230 and Cys-370 facilitates formation of the disulfide between Cys-370 and Cys-371, which promotes inactivation of the acyltransferase activity. May also form interchain disulfids between Cys-230 and Cys-370. Ca(2+) protects against disulfide bond formation and inactivation. Post-translationally, auto-transglutaminated: Forms covalent cross-links mediated by transglutaminase between Gln-633 and the epsilon-amino group of a lysine residue of itself or HMGB1, forming homopolymers and heteropolymers, respectively. In terms of processing, S-nitrosylated, leading to inactivation of the acyltransferase activity. As to expression, highest levels are detected in the lung. Lower levels are found in the liver, spleen and heart, but not in the brain.

The protein resides in the cytoplasm. Its subcellular location is the cytosol. It is found in the nucleus. It localises to the chromosome. The protein localises to the secreted. The protein resides in the extracellular space. Its subcellular location is the extracellular matrix. It is found in the cell membrane. It localises to the mitochondrion. The enzyme catalyses L-glutaminyl-[protein] + L-lysyl-[protein] = [protein]-L-lysyl-N(6)-5-L-glutamyl-[protein] + NH4(+). The catalysed reaction is L-glutaminyl-[protein] + serotonin = 5-serotonyl-L-glutamyl-[protein] + NH4(+). It catalyses the reaction L-glutaminyl-[protein] + dopamine = 5-dopaminyl-L-glutamyl-[protein] + NH4(+). It carries out the reaction L-glutaminyl-[protein] + histamine = 5-histaminyl-L-glutamyl-[protein] + NH4(+). The enzyme catalyses L-glutaminyl-[protein] + (R)-noradrenaline = 5-(R)-noradrenalinyl-L-glutamyl-[protein] + NH4(+). The catalysed reaction is L-glutaminyl-[protein] + H2O = L-glutamyl-[protein] + NH4(+). Its activity is regulated as follows. Acyltransferase activity is regulated by the binding of GTP and Ca(2+): inactivated by GTP, which stabilizes its closed structure, thereby obstructing the accessibility of substrates to the active sites. In contrast, Ca(2+) acts as a cofactor by inducing conformational change to the active open form. In absence of Ca(2+), Mg(2+) may bind Ca(2+)-binding sites, promoting GTP-binding and subsequent inhibition of the acyltransferase activity. Extracellularly reduced and activated by CLIC3. Calcium-dependent acyltransferase that catalyzes the formation of covalent bonds between peptide-bound glutamine and various primary amines, such as gamma-amino group of peptide-bound lysine, or mono- and polyamines, thereby producing cross-linked or aminated proteins, respectively. Involved in many biological processes, such as bone development, angiogenesis, wound healing, cellular differentiation, chromatin modification and apoptosis. Acts as a protein-glutamine gamma-glutamyltransferase by mediating the cross-linking of proteins, such as ACO2, HSPB6, FN1, HMGB1, RAP1GDS1, SLC25A4/ANT1, SPP1 and WDR54. Under physiological conditions, the protein cross-linking activity is inhibited by GTP; inhibition is relieved by Ca(2+) in response to various stresses. When secreted, catalyzes cross-linking of proteins of the extracellular matrix, such as FN1 and SPP1 resulting in the formation of scaffolds. Plays a key role during apoptosis, both by (1) promoting the cross-linking of cytoskeletal proteins resulting in condensation of the cytoplasm, and by (2) mediating cross-linking proteins of the extracellular matrix, resulting in the irreversible formation of scaffolds that stabilize the integrity of the dying cells before their clearance by phagocytosis, thereby preventing the leakage of harmful intracellular components. In addition to protein cross-linking, can use different monoamine substrates to catalyze a vast array of protein post-translational modifications: mediates aminylation of serotonin, dopamine, noradrenaline or histamine into glutamine residues of target proteins to generate protein serotonylation, dopaminylation, noradrenalinylation or histaminylation, respectively. Mediates protein serotonylation of small GTPases during activation and aggregation of platelets, leading to constitutive activation of these GTPases. Plays a key role in chromatin organization by mediating serotonylation and dopaminylation of histone H3. Catalyzes serotonylation of 'Gln-5' of histone H3 (H3Q5ser) during serotonergic neuron differentiation, thereby facilitating transcription. Acts as a mediator of neurotransmission-independent role of nuclear dopamine in ventral tegmental area (VTA) neurons: catalyzes dopaminylation of 'Gln-5' of histone H3 (H3Q5dop), thereby regulating relapse-related transcriptional plasticity in the reward system. Regulates vein remodeling by mediating serotonylation and subsequent inactivation of ATP2A2/SERCA2. Also acts as a protein deamidase by mediating the side chain deamidation of specific glutamine residues of proteins to glutamate. Catalyzes specific deamidation of protein gliadin, a component of wheat gluten in the diet. May also act as an isopeptidase cleaving the previously formed cross-links. Also able to participate in signaling pathways independently of its acyltransferase activity: acts as a signal transducer in alpha-1 adrenergic receptor-mediated stimulation of phospholipase C-delta (PLCD) activity and is required for coupling alpha-1 adrenergic agonists to the stimulation of phosphoinositide lipid metabolism. This chain is Protein-glutamine gamma-glutamyltransferase 2, found in Bos taurus (Bovine).